A 441-amino-acid chain; its full sequence is ATP-dependent protease ATPase subunit HslU (441 aa).

ATP-binding positions include I18 and 60-65 (GVGKTE). The interval 131-158 (ILDALLPRPRGSEYDHARDESSTRQTFR) is disordered. Residues 140-152 (RGSEYDHARDESS) show a composition bias toward basic and acidic residues. The ATP site is built by D254, E320, and R392.

Belongs to the ClpX chaperone family. HslU subfamily. A double ring-shaped homohexamer of HslV is capped on each side by a ring-shaped HslU homohexamer. The assembly of the HslU/HslV complex is dependent on binding of ATP.

Its subcellular location is the cytoplasm. ATPase subunit of a proteasome-like degradation complex; this subunit has chaperone activity. The binding of ATP and its subsequent hydrolysis by HslU are essential for unfolding of protein substrates subsequently hydrolyzed by HslV. HslU recognizes the N-terminal part of its protein substrates and unfolds these before they are guided to HslV for hydrolysis. The protein is ATP-dependent protease ATPase subunit HslU of Chromohalobacter salexigens (strain ATCC BAA-138 / DSM 3043 / CIP 106854 / NCIMB 13768 / 1H11).